A 763-amino-acid polypeptide reads, in one-letter code: Xaa-Pro dipeptidyl-peptidase (763 aa).

Catalysis depends on charge relay system residues serine 348, aspartate 468, and histidine 498.

It belongs to the peptidase S15 family. As to quaternary structure, homodimer.

It is found in the cytoplasm. The catalysed reaction is Hydrolyzes Xaa-Pro-|- bonds to release unblocked, N-terminal dipeptides from substrates including Ala-Pro-|-p-nitroanilide and (sequentially) Tyr-Pro-|-Phe-Pro-|-Gly-Pro-|-Ile.. Its function is as follows. Removes N-terminal dipeptides sequentially from polypeptides having unsubstituted N-termini provided that the penultimate residue is proline. In Lactococcus lactis subsp. lactis (strain IL1403) (Streptococcus lactis), this protein is Xaa-Pro dipeptidyl-peptidase (pepX).